Consider the following 136-residue polypeptide: Large ribosomal subunit protein uL3 (136 aa).

Q83 is modified (N5-methylglutamine).

This sequence belongs to the universal ribosomal protein uL3 family. As to quaternary structure, part of the 50S ribosomal subunit. Forms a cluster with proteins L14 and L19. In terms of processing, methylated by PrmB.

Functionally, one of the primary rRNA binding proteins, it binds directly near the 3'-end of the 23S rRNA, where it nucleates assembly of the 50S subunit. The sequence is that of Large ribosomal subunit protein uL3 (rplC) from Carsonella ruddii.